Consider the following 827-residue polypeptide: Zinc finger protein 438 (827 aa).

Disordered stretches follow at residues 1 to 31, 117 to 173, and 193 to 232; these read MQNSLSVPPRDEGESNIPSGTIQSRKGLQNK, LKLP…LYKP, and ALTNGSDHGDLRPPVTNTHGSLNPPATPASPTPEEPAKQD. 2 stretches are compositionally biased toward polar residues: residues 16-31 and 150-159; these read NIPSGTIQSRKGLQNK and PAQTQMCPQM. Residues 217 to 226 show a composition bias toward pro residues; the sequence is PATPASPTPE. C2H2-type zinc fingers lie at residues 506 to 528, 534 to 556, and 566 to 589; these read HRCHVCNHHFQFKQHLQDHMNTH, YSCRICRKSYVRPGSLSTHMKLH, and MCCEFCAKVFGHIRVYFGHLKEVH. Positions 682 to 723 are disordered; it reads FPGSKGTQEELVQHASHDWKRHPERGKPEKVHSSSEESHACP. 2 stretches are compositionally biased toward basic and acidic residues: residues 688–699 and 706–721; these read TQEELVQHASHD and RGKPEKVHSSSEESHA. The segment at 775–798 adopts a C2H2-type 4 zinc-finger fold; that stretch reads FNCLLCAEMLGQKEDLLHHWKHQH.

It is found in the nucleus. Acts as a transcriptional repressor. The chain is Zinc finger protein 438 (ZNF438) from Pongo abelii (Sumatran orangutan).